The chain runs to 424 residues: UPF0053 protein MG146 (424 aa).

The CNNM transmembrane domain maps to 6–191 (SGLTLTVIIL…EQNGLFSKED (186 aa)). The next 4 membrane-spanning stretches (helical) occupy residues 7–27 (GLTL…STVV), 71–91 (LITI…ILFL), 101–121 (LLSS…FCEI), and 135–155 (LVLF…ITKL). 2 consecutive CBS domains span residues 210-270 (MIKW…PKSL) and 272-332 (LNQL…IYDE).

The protein belongs to the UPF0053 family.

The protein localises to the cell membrane. This Mycoplasma genitalium (strain ATCC 33530 / DSM 19775 / NCTC 10195 / G37) (Mycoplasmoides genitalium) protein is UPF0053 protein MG146.